A 324-amino-acid polypeptide reads, in one-letter code: 2,3,4,5-tetrahydropyridine-2,6-dicarboxylate N-succinyltransferase (324 aa).

Positions 173 and 190 each coordinate Mg(2+). Glu206 serves as the catalytic Acyl-anhydride intermediate. Residues Arg208, Gly223, Ser226, Ala249, 264 to 265 (EA), Gly272, Lys284, and 297 to 300 (RRNS) contribute to the succinyl-CoA site.

Belongs to the type 2 tetrahydrodipicolinate N-succinyltransferase family. Homotrimer.

It is found in the cytoplasm. The enzyme catalyses (S)-2,3,4,5-tetrahydrodipicolinate + succinyl-CoA + H2O = (S)-2-succinylamino-6-oxoheptanedioate + CoA. It functions in the pathway amino-acid biosynthesis; L-lysine biosynthesis via DAP pathway; LL-2,6-diaminopimelate from (S)-tetrahydrodipicolinate (succinylase route): step 1/3. In terms of biological role, catalyzes the conversion of the cyclic tetrahydrodipicolinate (THDP) into the acyclic N-succinyl-L-2-amino-6-oxopimelate using succinyl-CoA. The chain is 2,3,4,5-tetrahydropyridine-2,6-dicarboxylate N-succinyltransferase from Geodermatophilus obscurus (strain ATCC 25078 / DSM 43160 / JCM 3152 / CCUG 61914 / KCC A-0152 / KCTC 9177 / NBRC 13315 / NRRL B-3577 / G-20).